The chain runs to 167 residues: Transmembrane protein 229B (167 aa).

Residues 1 to 14 (MASAEPLTALSRWY) lie on the Cytoplasmic side of the membrane. Residues 15–35 (LYAIHGYFCEVMFTAAWEFVV) traverse the membrane as a helical segment. Topologically, residues 36 to 40 (NFNWK) are extracellular. Residues 41–61 (FPGVTSVWALFIYGTSILIVE) traverse the membrane as a helical segment. Residues 62-73 (RMYLRLRGRCPL) lie on the Cytoplasmic side of the membrane. Residues 74–94 (LLRCLIYTLWTYLWEFTTGFI) form a helical membrane-spanning segment. At 95-111 (LRQFNACPWDYSQFDFD) the chain is on the extracellular side. The chain crosses the membrane as a helical span at residues 112–132 (FMGLITLEYAVPWFCGALLVE). Over 133–167 (QFVIRNTLRLRFDKDAEPGEPSGALALANGHVKTD) the chain is Cytoplasmic.

This sequence belongs to the TMEM229 family.

Its subcellular location is the membrane. The polypeptide is Transmembrane protein 229B (TMEM229B) (Bos taurus (Bovine)).